A 129-amino-acid polypeptide reads, in one-letter code: Small ribosomal subunit protein uS8 (129 aa).

It belongs to the universal ribosomal protein uS8 family. In terms of assembly, part of the 30S ribosomal subunit.

Functionally, one of the primary rRNA binding proteins, it binds directly to 16S rRNA central domain where it helps coordinate assembly of the platform of the 30S subunit. This Thermofilum pendens (strain DSM 2475 / Hrk 5) protein is Small ribosomal subunit protein uS8.